The following is a 200-amino-acid chain: NADH-quinone oxidoreductase subunit C (200 aa).

The protein belongs to the complex I 30 kDa subunit family. As to quaternary structure, NDH-1 is composed of 14 different subunits. Subunits NuoB, C, D, E, F, and G constitute the peripheral sector of the complex.

It is found in the cell inner membrane. The enzyme catalyses a quinone + NADH + 5 H(+)(in) = a quinol + NAD(+) + 4 H(+)(out). Functionally, NDH-1 shuttles electrons from NADH, via FMN and iron-sulfur (Fe-S) centers, to quinones in the respiratory chain. The immediate electron acceptor for the enzyme in this species is believed to be ubiquinone. Couples the redox reaction to proton translocation (for every two electrons transferred, four hydrogen ions are translocated across the cytoplasmic membrane), and thus conserves the redox energy in a proton gradient. The chain is NADH-quinone oxidoreductase subunit C from Burkholderia ambifaria (strain MC40-6).